Here is a 370-residue protein sequence, read N- to C-terminus: NSFL1 cofactor p47 (370 aa).

Residues 54–73 (SQATPSSVSRGTAPSDNRVT) are disordered. Serine 74, serine 102, serine 114, and serine 140 each carry phosphoserine. Disordered regions lie at residues 80–116 (HDQD…KSPN) and 138–157 (TKSP…GYRL). Residues 109 to 115 (PPRKKSP) carry the Nuclear localization signal motif. Tyrosine 167 is modified (phosphotyrosine). A Nuclear localization signal motif is present at residues 172–175 (RRRH). Phosphoserine occurs at positions 176, 192, and 272. The SEP domain occupies 179 to 244 (DVHVVLKLWK…MEDHRDEDFV (66 aa)). A UBX domain is found at 291-368 (EAEPTTNIQI…NLLNAVIVQR (78 aa)).

The protein belongs to the NSFL1C family. As to quaternary structure, part of a ternary complex containing STX5A, NSFL1C and VCP. NSFL1C forms a homotrimer that binds to one end of a VCP homohexamer. The complex binds to membranes enriched in phosphatidylethanolamine-containing lipids and promotes Golgi membrane fusion. Interaction with VCIP135 leads to dissociation of the complex via ATP hydrolysis by VCP. Binds ubiquitin and mono-ubiquitinated proteins via its N-terminal UBA-like domain when bound to VCP. Post-translationally, phosphorylated during mitosis. Phosphorylation inhibits interaction with Golgi membranes and is required for the fragmentation of the Golgi stacks during mitosis.

It is found in the nucleus. The protein localises to the golgi apparatus. The protein resides in the golgi stack. It localises to the chromosome. Its subcellular location is the cytoplasm. It is found in the cytoskeleton. The protein localises to the microtubule organizing center. The protein resides in the centrosome. In terms of biological role, reduces the ATPase activity of VCP. Necessary for the fragmentation of Golgi stacks during mitosis and for VCP-mediated reassembly of Golgi stacks after mitosis. May play a role in VCP-mediated formation of transitional endoplasmic reticulum (tER). Inhibits the activity of CTSL (in vitro). Together with UBXN2B/p37, regulates the centrosomal levels of kinase AURKA/Aurora A during mitotic progression by promoting AURKA removal from centrosomes in prophase. Also, regulates spindle orientation during mitosis. The chain is NSFL1 cofactor p47 (Nsfl1c) from Mus musculus (Mouse).